The sequence spans 23 residues: MFFSSKKCKTVSKTFRGPCVRNA.

It belongs to the DEFL family. Group IV subfamily. Distributed in the epidermal cell layer of leaves and in the subepidermal layer region of stems. Not in roots.

It localises to the secreted. Its subcellular location is the cell wall. Its function is as follows. Antimicrobial peptide. Active against Fusarium spp., Gram-positive and Gram-negative bacterial pathogens. The chain is Defensin D4 from Spinacia oleracea (Spinach).